The sequence spans 823 residues: Kinesin-like protein KIN-7N (823 aa).

One can recognise a Kinesin motor domain in the interval 3–325 (KICVAVRVRP…LQFASRAKRI (323 aa)). Position 83–90 (83–90 (GQTSSGKT)) interacts with ATP. Coiled coils occupy residues 341–414 (LKRQ…NLNN), 527–557 (RENH…FNEQ), and 696–786 (EKKL…MEEE).

It belongs to the TRAFAC class myosin-kinesin ATPase superfamily. Kinesin family. KIN-7 subfamily.

The chain is Kinesin-like protein KIN-7N from Arabidopsis thaliana (Mouse-ear cress).